The chain runs to 343 residues: Ribosomal RNA small subunit methyltransferase C (343 aa).

Belongs to the methyltransferase superfamily. RsmC family. Monomer.

It is found in the cytoplasm. It catalyses the reaction guanosine(1207) in 16S rRNA + S-adenosyl-L-methionine = N(2)-methylguanosine(1207) in 16S rRNA + S-adenosyl-L-homocysteine + H(+). Its function is as follows. Specifically methylates the guanine in position 1207 of 16S rRNA in the 30S particle. This chain is Ribosomal RNA small subunit methyltransferase C, found in Escherichia coli O6:K15:H31 (strain 536 / UPEC).